Consider the following 545-residue polypeptide: Phospholipase B-like 1 (545 aa).

The first 35 residues, 1–35 (MSRHSQDERLGLPQPPALLPLLLLLLAVAVPLSQA), serve as a signal peptide directing secretion. An N-linked (GlcNAc...) (high mannose) asparagine; alternate glycan is attached at asparagine 68. N-linked (GlcNAc...) (hybrid) asparagine; alternate glycosylation occurs at asparagine 68. The propeptide at 206-224 (LSPTKNSSLKFFKRWDMGH) is removed in mature form. N-linked (GlcNAc...) (high mannose) asparagine; alternate glycosylation is found at asparagine 305, asparagine 363, and asparagine 408. Residues asparagine 305, asparagine 363, and asparagine 408 are each glycosylated (N-linked (GlcNAc...) (hybrid) asparagine; alternate). Cystine bridges form between cysteine 467/cysteine 472 and cysteine 471/cysteine 486. Asparagine 523 is a glycosylation site (N-linked (GlcNAc...) (high mannose) asparagine; alternate). Asparagine 523 is a glycosylation site (N-linked (GlcNAc...) (hybrid) asparagine; alternate).

This sequence belongs to the phospholipase B-like family. May form a homodimer, each monomer is composed of a chain A and a chain B. The maturation cleavages that produces chains A and B are required to open the putative substrate binding pocket. Both chains A and B remain associated in the mature protein.

Its subcellular location is the lysosome. Its function is as follows. Exhibits a weak phospholipase activity, acting on various phospholipids, including phosphatidylcholine, phosphatidylinositol, phosphatidylethanolamine and lysophospholipids. However, in view of the small size of the putative binding pocket, it has been proposed that it may act rather as an amidase or a peptidase. The chain is Phospholipase B-like 1 (PLBD1) from Bos taurus (Bovine).